A 92-amino-acid polypeptide reads, in one-letter code: Ribonuclease P protein component 1 (92 aa).

Belongs to the eukaryotic/archaeal RNase P protein component 1 family. Consists of a catalytic RNA component and at least 4-5 protein subunits.

Its subcellular location is the cytoplasm. The catalysed reaction is Endonucleolytic cleavage of RNA, removing 5'-extranucleotides from tRNA precursor.. Part of ribonuclease P, a protein complex that generates mature tRNA molecules by cleaving their 5'-ends. This is Ribonuclease P protein component 1 from Staphylothermus marinus (strain ATCC 43588 / DSM 3639 / JCM 9404 / F1).